We begin with the raw amino-acid sequence, 546 residues long: Probable protein kinase UbiB (546 aa).

The 379-residue stretch at 124–502 (DFEIKPLASA…HVRQGQSRYF (379 aa)) folds into the Protein kinase domain. Residues 130 to 138 (LASASIAQV) and lysine 153 each bind ATP. The active-site Proton acceptor is the aspartate 288. Helical transmembrane passes span 501-521 (YFLG…VSRP) and 522-542 (EWGL…FVGW).

This sequence belongs to the ABC1 family. UbiB subfamily.

It is found in the cell inner membrane. The protein operates within cofactor biosynthesis; ubiquinone biosynthesis [regulation]. In terms of biological role, is probably a protein kinase regulator of UbiI activity which is involved in aerobic coenzyme Q (ubiquinone) biosynthesis. This chain is Probable protein kinase UbiB, found in Shigella boydii serotype 18 (strain CDC 3083-94 / BS512).